The primary structure comprises 480 residues: ATP synthase subunit beta 1 (480 aa).

154 to 161 is a binding site for ATP; that stretch reads GGAGVGKT.

The protein belongs to the ATPase alpha/beta chains family. F-type ATPases have 2 components, CF(1) - the catalytic core - and CF(0) - the membrane proton channel. CF(1) has five subunits: alpha(3), beta(3), gamma(1), delta(1), epsilon(1). CF(0) has four main subunits: a(1), b(1), b'(1) and c(9-12).

It localises to the cell inner membrane. It catalyses the reaction ATP + H2O + 4 H(+)(in) = ADP + phosphate + 5 H(+)(out). Functionally, produces ATP from ADP in the presence of a proton gradient across the membrane. The catalytic sites are hosted primarily by the beta subunits. The protein is ATP synthase subunit beta 1 of Chlorobaculum tepidum (strain ATCC 49652 / DSM 12025 / NBRC 103806 / TLS) (Chlorobium tepidum).